The following is a 1131-amino-acid chain: Protein DWARF 53 (1131 aa).

In terms of domain architecture, Clp R spans 8-181 (ARQCLSPAAV…KLAILRPAPP (174 aa)). 2 repeat regions span residues 12–85 (LSPA…LDRL) and 103–181 (VSNS…PAPP). Residues 511 to 574 (NRDPYKPFPR…ISSPSVTNKR (64 aa)) are disordered. Residues 558–569 (SSSTARPISSPS) show a composition bias toward low complexity. Residues 578–582 (LVLNL) carry the EAR 1 motif. The tract at residues 588–655 (KSDENLQERG…KRVEDSERSV (68 aa)) is disordered. A compositionally biased stretch (polar residues) spans 597–609 (GMQSQHGTLSNVD). The span at 646 to 655 (KRVEDSERSV) shows a compositional bias: basic and acidic residues. The EAR 2 motif lies at 799-803 (LDLNL). 2 disordered regions span residues 951–970 (ISDD…RLHR) and 976–1002 (FDLN…NSYG). The EAR 3 motif lies at 976-981 (FDLNLP). Acidic residues predominate over residues 982–993 (VDEDEPLDADDD).

The protein belongs to the ClpA/ClpB family. As to quaternary structure, interacts with D3. Interacts with D14. The interaction with D14 is enhanced in the presence of strigolactones. The interaction with D14 occurs in the presence of (2'R) stereoisomers of strigolactones, but not (2'S) stereoisomers. Interacts with the TOPLESS-related proteins TPR1, TPR2 and TPR3. Interacts with SPL14/IPA1. Post-translationally, polyubiquitinated. Strigolactone, but not karrikin, triggers rapid SCF(D3)-dependent degradation via the proteasome. Expressed in the shoot bases of seedlings, young leaves, axillary buds and young panicles. Expressed in young roots vasculature, culms, internodes and nodes, preferentially in the parenchyma cells surrounding the xylem.

The protein resides in the nucleus. Repressor of strigolactones (SL) signaling. Subjected to a negative feedback control of SL signaling. Suppresses the transcriptional activation activity of SPL14/IPA1 in SL signaling. Acts with SPL14/IPA1 to mediate the SL-regulated tiller development. Subject to a negative feedback regulation by SPL14/IPA1, which binds to D53 promoter to repress D53 gene expression. This chain is Protein DWARF 53, found in Oryza sativa subsp. japonica (Rice).